The following is a 432-amino-acid chain: Alcohol acyltransferase 9 (432 aa).

Catalysis depends on proton acceptor residues His156 and Asp379.

This sequence belongs to the plant acyltransferase family.

The catalysed reaction is 2-(methylsulfanyl)acetyl-CoA + butan-1-ol = butyl 2-(methylsulfanyl)acetate + CoA. It catalyses the reaction ethanol + acetyl-CoA = ethyl acetate + CoA. It carries out the reaction butan-1-ol + acetyl-CoA = butyl acetate + CoA. The enzyme catalyses butan-1-ol + propanoyl-CoA = butyl propanoate + CoA. Its function is as follows. Involved in the biosynthesis of volatile esters which confer kiwifruit flavor. Alcohol acyl transferase that can use a wide range of alcohols as substrate to produce esters. Exhibits acetyl-CoA:alcohol O-acyltransferase activity. This is Alcohol acyltransferase 9 from Actinidia chinensis var. chinensis (Chinese soft-hair kiwi).